The chain runs to 105 residues: Urease subunit beta (105 aa).

The protein belongs to the urease beta subunit family. In terms of assembly, heterotrimer of UreA (gamma), UreB (beta) and UreC (alpha) subunits. Three heterotrimers associate to form the active enzyme.

It is found in the cytoplasm. It carries out the reaction urea + 2 H2O + H(+) = hydrogencarbonate + 2 NH4(+). Its pathway is nitrogen metabolism; urea degradation; CO(2) and NH(3) from urea (urease route): step 1/1. In Marinobacter nauticus (strain ATCC 700491 / DSM 11845 / VT8) (Marinobacter aquaeolei), this protein is Urease subunit beta.